A 409-amino-acid polypeptide reads, in one-letter code: Dihydroorotase (409 aa).

Zn(2+)-binding residues include His57 and His59. Residues 59-61 (HLR) and Asn91 each bind substrate. Positions 139, 168, 208, and 276 each coordinate Zn(2+). N6-carboxylysine is present on Lys139. The active site involves Asp276. Substrate is bound by residues His280 and 290–291 (AG).

It belongs to the metallo-dependent hydrolases superfamily. DHOase family. Class I DHOase subfamily. Zn(2+) serves as cofactor.

The enzyme catalyses (S)-dihydroorotate + H2O = N-carbamoyl-L-aspartate + H(+). It participates in pyrimidine metabolism; UMP biosynthesis via de novo pathway; (S)-dihydroorotate from bicarbonate: step 3/3. In terms of biological role, catalyzes the reversible cyclization of carbamoyl aspartate to dihydroorotate. This chain is Dihydroorotase, found in Thermococcus kodakarensis (strain ATCC BAA-918 / JCM 12380 / KOD1) (Pyrococcus kodakaraensis (strain KOD1)).